Here is a 902-residue protein sequence, read N- to C-terminus: Cytosolic 10-formyltetrahydrofolate dehydrogenase (902 aa).

Positions 1–310 are hydrolase domain; it reads MKIAVIGQSL…PASQFFKGSA (310 aa). S9 is subject to Phosphoserine. K38 is subject to N6-succinyllysine. 88–90 provides a ligand contact to (6R)-10-formyltetrahydrofolate; that stretch reads QFI. H106 functions as the Proton donor in the catalytic mechanism. D142 contributes to the (6R)-10-formyltetrahydrofolate binding site. Residues 318-395 enclose the Carrier domain; it reads EEELATAEAV…DFIQLLVRKL (78 aa). O-(pantetheine 4'-phosphoryl)serine is present on S354. Positions 417–902 are aldehyde dehydrogenase domain; that stretch reads TLQMPYQLFI…LRIKTVTFEY (486 aa). NADP(+) contacts are provided by residues 571 to 573 and 597 to 600; these read IPW and KPAQ. Phosphoserine is present on residues S629 and S631. NADP(+)-binding positions include 630 to 635 and 650 to 651; these read GSLVGQ and GS. An N6-succinyllysine modification is found at K660. E673 functions as the Proton acceptor in the catalytic mechanism. 673–674 is a binding site for NADP(+); it reads EL. Catalysis depends on C707, which acts as the Proton donor. K757 is a binding site for NADP(+). Residue K767 is modified to N6-succinyllysine. An NADP(+)-binding site is contributed by 804–806; it reads ESF. S825 bears the Phosphoserine mark. At K882 the chain carries N6-acetyllysine.

This sequence in the N-terminal section; belongs to the GART family. It in the C-terminal section; belongs to the aldehyde dehydrogenase family. ALDH1L subfamily. As to quaternary structure, homotetramer. In terms of processing, phosphopantetheinylation at Ser-354 by AASDHPPT is required for the formyltetrahydrofolate dehydrogenase activity. Highly expressed in liver (at protein level). Also expressed in pancreas, brain and lung (at protein level).

It localises to the cytoplasm. The protein resides in the cytosol. It carries out the reaction (6R)-10-formyltetrahydrofolate + NADP(+) + H2O = (6S)-5,6,7,8-tetrahydrofolate + CO2 + NADPH + H(+). Functionally, cytosolic 10-formyltetrahydrofolate dehydrogenase that catalyzes the NADP(+)-dependent conversion of 10-formyltetrahydrofolate to tetrahydrofolate and carbon dioxide. May also have an NADP(+)-dependent aldehyde dehydrogenase activity towards formaldehyde, acetaldehyde, propionaldehyde, and benzaldehyde. The protein is Cytosolic 10-formyltetrahydrofolate dehydrogenase of Mus musculus (Mouse).